The primary structure comprises 360 residues: Mannonate dehydratase (360 aa).

It belongs to the mannonate dehydratase family. The cofactor is Fe(2+). Mn(2+) is required as a cofactor.

It catalyses the reaction D-mannonate = 2-dehydro-3-deoxy-D-gluconate + H2O. It functions in the pathway carbohydrate metabolism; pentose and glucuronate interconversion. In terms of biological role, catalyzes the dehydration of D-mannonate. The sequence is that of Mannonate dehydratase from Thermotoga sp. (strain RQ2).